We begin with the raw amino-acid sequence, 464 residues long: 3-isopropylmalate dehydratase large subunit (464 aa).

The [4Fe-4S] cluster site is built by cysteine 337, cysteine 397, and cysteine 400.

It belongs to the aconitase/IPM isomerase family. LeuC type 1 subfamily. In terms of assembly, heterodimer of LeuC and LeuD. [4Fe-4S] cluster is required as a cofactor.

The enzyme catalyses (2R,3S)-3-isopropylmalate = (2S)-2-isopropylmalate. The protein operates within amino-acid biosynthesis; L-leucine biosynthesis; L-leucine from 3-methyl-2-oxobutanoate: step 2/4. Its function is as follows. Catalyzes the isomerization between 2-isopropylmalate and 3-isopropylmalate, via the formation of 2-isopropylmaleate. This chain is 3-isopropylmalate dehydratase large subunit, found in Bacillus cereus (strain AH820).